Reading from the N-terminus, the 401-residue chain is tRNA(Ile)-lysidine synthase (401 aa).

ATP is bound at residue 17-22 (SGGPDS).

This sequence belongs to the tRNA(Ile)-lysidine synthase family.

It localises to the cytoplasm. The catalysed reaction is cytidine(34) in tRNA(Ile2) + L-lysine + ATP = lysidine(34) in tRNA(Ile2) + AMP + diphosphate + H(+). Ligates lysine onto the cytidine present at position 34 of the AUA codon-specific tRNA(Ile) that contains the anticodon CAU, in an ATP-dependent manner. Cytidine is converted to lysidine, thus changing the amino acid specificity of the tRNA from methionine to isoleucine. This Mycoplasma mycoides subsp. mycoides SC (strain CCUG 32753 / NCTC 10114 / PG1) protein is tRNA(Ile)-lysidine synthase.